Reading from the N-terminus, the 394-residue chain is LL-diaminopimelate aminotransferase (394 aa).

Positions 14 and 41 each coordinate substrate. Pyridoxal 5'-phosphate contacts are provided by residues Y71, 104 to 105, Y128, N174, Y205, and 233 to 235; these read AK and SFS. Residues K105, Y128, and N174 each coordinate substrate. K236 carries the N6-(pyridoxal phosphate)lysine modification. Positions 244 and 275 each coordinate pyridoxal 5'-phosphate. Residues N275 and R369 each contribute to the substrate site.

The protein belongs to the class-I pyridoxal-phosphate-dependent aminotransferase family. LL-diaminopimelate aminotransferase subfamily. Homodimer. Pyridoxal 5'-phosphate is required as a cofactor.

The enzyme catalyses (2S,6S)-2,6-diaminopimelate + 2-oxoglutarate = (S)-2,3,4,5-tetrahydrodipicolinate + L-glutamate + H2O + H(+). It participates in amino-acid biosynthesis; L-lysine biosynthesis via DAP pathway; LL-2,6-diaminopimelate from (S)-tetrahydrodipicolinate (aminotransferase route): step 1/1. Functionally, involved in the synthesis of meso-diaminopimelate (m-DAP or DL-DAP), required for both lysine and peptidoglycan biosynthesis. Catalyzes the direct conversion of tetrahydrodipicolinate to LL-diaminopimelate. The chain is LL-diaminopimelate aminotransferase from Chlamydia trachomatis serovar L2b (strain UCH-1/proctitis).